Reading from the N-terminus, the 126-residue chain is UPF0332 protein glr0978 (126 aa).

The protein belongs to the UPF0332 family.

This Gloeobacter violaceus (strain ATCC 29082 / PCC 7421) protein is UPF0332 protein glr0978.